A 264-amino-acid polypeptide reads, in one-letter code: S-adenosylmethionine decarboxylase proenzyme (264 aa).

Catalysis depends on serine 113, which acts as the Schiff-base intermediate with substrate; via pyruvic acid. Residue serine 113 is modified to Pyruvic acid (Ser); by autocatalysis. The Proton acceptor; for processing activity role is filled by histidine 118. Cysteine 141 acts as the Proton donor; for catalytic activity in catalysis.

This sequence belongs to the prokaryotic AdoMetDC family. Type 2 subfamily. In terms of assembly, heterooctamer of four alpha and four beta chains arranged as a tetramer of alpha/beta heterodimers. Pyruvate serves as cofactor. Is synthesized initially as an inactive proenzyme. Formation of the active enzyme involves a self-maturation process in which the active site pyruvoyl group is generated from an internal serine residue via an autocatalytic post-translational modification. Two non-identical subunits are generated from the proenzyme in this reaction, and the pyruvate is formed at the N-terminus of the alpha chain, which is derived from the carboxyl end of the proenzyme. The post-translation cleavage follows an unusual pathway, termed non-hydrolytic serinolysis, in which the side chain hydroxyl group of the serine supplies its oxygen atom to form the C-terminus of the beta chain, while the remainder of the serine residue undergoes an oxidative deamination to produce ammonia and the pyruvoyl group blocking the N-terminus of the alpha chain.

The catalysed reaction is S-adenosyl-L-methionine + H(+) = S-adenosyl 3-(methylsulfanyl)propylamine + CO2. It participates in amine and polyamine biosynthesis; S-adenosylmethioninamine biosynthesis; S-adenosylmethioninamine from S-adenosyl-L-methionine: step 1/1. Its function is as follows. Catalyzes the decarboxylation of S-adenosylmethionine to S-adenosylmethioninamine (dcAdoMet), the propylamine donor required for the synthesis of the polyamines spermine and spermidine from the diamine putrescine. In Hahella chejuensis (strain KCTC 2396), this protein is S-adenosylmethionine decarboxylase proenzyme.